Reading from the N-terminus, the 41-residue chain is Ornatin-A3 (41 aa).

A Cell attachment site motif is present at residues 33 to 35; sequence RGD.

This sequence belongs to the ornatin family.

It is found in the secreted. Its function is as follows. Potent inhibitor of fibrinogen interaction with platelet receptors expressed on glycoprotein IIb-IIIa complex. May prevent blood from clotting during either feeding and/or storage of ingested blood. The sequence is that of Ornatin-A3 from Placobdella ornata (Turtle leech).